The sequence spans 428 residues: Histidinol dehydrogenase (428 aa).

3 residues coordinate NAD(+): tyrosine 126, glutamine 188, and asparagine 211. Positions 234, 256, and 259 each coordinate substrate. Residues glutamine 256 and histidine 259 each coordinate Zn(2+). Catalysis depends on proton acceptor residues glutamate 324 and histidine 325. 4 residues coordinate substrate: histidine 325, aspartate 358, glutamate 412, and histidine 417. Aspartate 358 contributes to the Zn(2+) binding site. Histidine 417 is a Zn(2+) binding site.

This sequence belongs to the histidinol dehydrogenase family. Requires Zn(2+) as cofactor.

The catalysed reaction is L-histidinol + 2 NAD(+) + H2O = L-histidine + 2 NADH + 3 H(+). The protein operates within amino-acid biosynthesis; L-histidine biosynthesis; L-histidine from 5-phospho-alpha-D-ribose 1-diphosphate: step 9/9. In terms of biological role, catalyzes the sequential NAD-dependent oxidations of L-histidinol to L-histidinaldehyde and then to L-histidine. The polypeptide is Histidinol dehydrogenase (Chlorobaculum tepidum (strain ATCC 49652 / DSM 12025 / NBRC 103806 / TLS) (Chlorobium tepidum)).